Reading from the N-terminus, the 449-residue chain is Trigger factor (449 aa).

Residues 169 to 254 (GDRITVDFVG…AKQVEAPGEL (86 aa)) form the PPIase FKBP-type domain.

Belongs to the FKBP-type PPIase family. Tig subfamily.

The protein localises to the cytoplasm. The catalysed reaction is [protein]-peptidylproline (omega=180) = [protein]-peptidylproline (omega=0). Functionally, involved in protein export. Acts as a chaperone by maintaining the newly synthesized protein in an open conformation. Functions as a peptidyl-prolyl cis-trans isomerase. In Azorhizobium caulinodans (strain ATCC 43989 / DSM 5975 / JCM 20966 / LMG 6465 / NBRC 14845 / NCIMB 13405 / ORS 571), this protein is Trigger factor.